The sequence spans 347 residues: uncharacterized protein (347 aa).

The signal sequence occupies residues 1–26; that stretch reads MQGRVAGSCAPLGLLLVCLHLPGLFA. Residues 41–60 are compositionally biased toward polar residues; that stretch reads GTNLPQLGQPSSTGPSNSEH. 2 disordered regions span residues 41 to 110 and 148 to 189; these read GTNL…MDSW and SGPL…AGGK. Residues 148–157 are compositionally biased toward low complexity; it reads SGPLPGESSP.

In terms of assembly, binds to numerous extracellular matrix proteins.

It is found in the secreted. It localises to the extracellular space. The protein resides in the extracellular matrix. This is an uncharacterized protein from Pan troglodytes (Chimpanzee).